Consider the following 707-residue polypeptide: Leucine-rich repeat neuronal protein 3 (707 aa).

An N-terminal signal peptide occupies residues 1–22; that stretch reads MKDTPLQVHVLLGLAITTLVQA. Positions 23-69 constitute an LRRNT domain; sequence IDKKVDCPQLCTCEIRPWFTPRSIYMEASTVDCNDLGLLNFPARLPA. The Extracellular portion of the chain corresponds to 23-626; sequence IDKKVDCPQL…DGKEYGKNHT (604 aa). LRR repeat units follow at residues 70–91, 93–114, 117–138, 141–162, 165–186, 189–210, 213–234, 237–258, 261–282, 285–304, 310–332, and 335–358; these read DTQILLLQTNNIARIEHSTDFP, NLTGLDLSQNNLSSVTNINVQK, QLLSVYLEENKLTELPEKCLYG, NLQELYVNHNLLSTISPGAFIG, NLLRLHLNSNRLQMINSQWFDA, NLEILMLGDNPIIRIKDMNFQP, KLRSLVIAGINLTEIPDDALAG, NLESISFYDNRLSKVPQVALQK, NLKFLDLNKNPINRIRRGDFSN, HLKELGINNMPELVSIDSLA, DLRKIEATNNPRLSYIHPNAFFR, and KLESLMLNTNALSALYHGTIESLP. N93 and N103 each carry an N-linked (GlcNAc...) asparagine glycan. Residue N223 is glycosylated (N-linked (GlcNAc...) asparagine). An LRRCT domain is found at 368 to 421; sequence NPIRCDCVIRWINMNKTNIRFMEPDSLFCVDPPEFQGQNVRQVHFRDMMEICLP. N-linked (GlcNAc...) asparagine glycosylation occurs at N382. The Ig-like C2-type domain occupies 421–514; sequence PLIAPESFPS…DLKSIMIKVG (94 aa). C444 and C496 form a disulfide bridge. N522, N579, N608, and N624 each carry an N-linked (GlcNAc...) asparagine glycan. Residues 523-614 enclose the Fibronectin type-III domain; the sequence is GSLNIKIRDI…QCVNVTTKSL (92 aa). A helical transmembrane segment spans residues 627 to 647; it reads VFVACVGGLLGIIGVMCLFSC. Topologically, residues 648-707 are cytoplasmic; that stretch reads VSQEGSSEGEHSYAVNHCHKPALAFSELYPPLINLWESSKEKRATLEVKATAIGVPTNMS.

In terms of tissue distribution, expressed in the brain, in Stronger expression in the ventricular zone and anlage of thalamus, spinal cord, and dorsal root ganglion in 11-17 dpc cerebellum and cerebral cortex in adults.

It is found in the membrane. This Mus musculus (Mouse) protein is Leucine-rich repeat neuronal protein 3 (Lrrn3).